The chain runs to 723 residues: Probable C-mannosyltransferase DPY19L4 (723 aa).

The segment at 1–33 (MAEEEGPPVELRQRKKPKSSENKESAKEEKISD) is disordered. Residue A2 is modified to N-acetylalanine. Positions 18 to 32 (KSSENKESAKEEKIS) are enriched in basic and acidic residues. The next 12 membrane-spanning stretches (helical) occupy residues 52-72 (IFIGCLAAVTSGMMYALYLSA), 161-178 (VYFYIGIVFGLQGIYVTA), 184-202 (WLMSGTWLAGMLTVAWFVI), 222-240 (LPYFACQIAALTGYLKSNL), 260-280 (MMMWEYSHYLLFLQAISLFLL), 292-310 (YEVYKIYIFSLFLGYLLQF), 316-337 (LVSPLLSLVAALMLAKCLQLNV), 349-370 (VINFYLVCTLTITLNIIMKMFV), 421-441 (LLPFYILVLIICFLSMLQVIF), 466-486 (IIYHVIHTILLGSLAMVIEGL), 489-509 (IWIPYVCMLAAFGVCSPELWM), and 522-542 (PILLALILSMAVPTIIGLSLW).

The protein belongs to the dpy-19 family. Widely expressed.

The protein localises to the membrane. Functionally, probable C-mannosyltransferase that mediates C-mannosylation of tryptophan residues on target proteins. This is Probable C-mannosyltransferase DPY19L4 (DPY19L4) from Homo sapiens (Human).